The primary structure comprises 330 residues: Replication factor C small subunit (330 aa).

ATP is bound at residue 48–55 (GPPGTGKT).

Belongs to the activator 1 small subunits family. RfcS subfamily. In terms of assembly, heteropentamer composed of four small subunits (RfcS) and one large subunit (RfcL). A homotetramer of this subunit interacts with PCNA heterodimer PCNA1-PCNA2.

Its function is as follows. Part of the RFC clamp loader complex which loads the PCNA sliding clamp onto DNA. The complex possesses DNA-dependent ATPase activity. The chain is Replication factor C small subunit (rfcS) from Saccharolobus solfataricus (strain ATCC 35092 / DSM 1617 / JCM 11322 / P2) (Sulfolobus solfataricus).